The chain runs to 505 residues: L-carnitine/gamma-butyrobetaine antiporter (505 aa).

The next 12 membrane-spanning stretches (helical) occupy residues 10-30 (IEPKVFFPPLIIVGILCWLTV), 50-70 (IWGWAFEWYMVVMLIGWFWLV), 92-112 (IFMMFASCTSAAVLFWGSIEI), 143-163 (GPLPWATYSFLSVAFAYFFFV), 195-215 (FYLVALIFAMGTSLGLATPLV), 231-251 (LDAIIITCWIILNAICVACGL), 263-283 (SYLSFLMLGWVFIVSGASFIM), 316-336 (WTVFYWAWWVIYAIQMSIFLA), 347-367 (LCFGMVLGLTASTWILWTVLG), 403-423 (LSTATMWGFFILCFIATVTLI), 446-466 (LLVRIGWSVLVGIIGIVLLAL), and 475-495 (AIIAGGCPLFFVNIMVTLSFI).

It belongs to the BCCT transporter (TC 2.A.15) family. CaiT subfamily. Homotrimer.

It localises to the cell inner membrane. It carries out the reaction 4-(trimethylamino)butanoate(in) + (R)-carnitine(out) = 4-(trimethylamino)butanoate(out) + (R)-carnitine(in). It functions in the pathway amine and polyamine metabolism; carnitine metabolism. Its function is as follows. Catalyzes the exchange of L-carnitine for gamma-butyrobetaine. In Salmonella arizonae (strain ATCC BAA-731 / CDC346-86 / RSK2980), this protein is L-carnitine/gamma-butyrobetaine antiporter.